Here is a 430-residue protein sequence, read N- to C-terminus: Enolase (430 aa).

A (2R)-2-phosphoglycerate-binding site is contributed by glutamine 167. Residue glutamate 209 is the Proton donor of the active site. The Mg(2+) site is built by aspartate 246, glutamate 287, and aspartate 314. (2R)-2-phosphoglycerate contacts are provided by lysine 339, arginine 368, serine 369, and lysine 390. Lysine 339 serves as the catalytic Proton acceptor.

This sequence belongs to the enolase family. The cofactor is Mg(2+).

It is found in the cytoplasm. The protein resides in the secreted. It localises to the cell surface. The enzyme catalyses (2R)-2-phosphoglycerate = phosphoenolpyruvate + H2O. It participates in carbohydrate degradation; glycolysis; pyruvate from D-glyceraldehyde 3-phosphate: step 4/5. Functionally, catalyzes the reversible conversion of 2-phosphoglycerate (2-PG) into phosphoenolpyruvate (PEP). It is essential for the degradation of carbohydrates via glycolysis. The sequence is that of Enolase from Prochlorococcus marinus (strain AS9601).